We begin with the raw amino-acid sequence, 1121 residues long: Anillin (1121 aa).

Residue Met-1 is modified to N-acetylmethionine. A compositionally biased stretch (basic and acidic residues) spans 1 to 25; sequence MDPFTEKLLERTRARRENLQRKMAE. Residues 1-45 form a required for ubiquitination region; that stretch reads MDPFTEKLLERTRARRENLQRKMAERPTAVARSAPHAKRGREPLS. Disordered stretches follow at residues 1-113, 125-196, and 212-402; these read MDPF…AAIS, ADRG…PVGR, and DDVS…TKAI. An interaction with CD2AP region spans residues 1–154; it reads MDPFTEKLLE…MQRLAEQRRH (154 aa). The interval 1 to 228 is nuclear localization; that stretch reads MDPFTEKLLE…AKQNSVQEQP (228 aa). Residues Ser-73 and Ser-96 each carry the phosphoserine modification. A compositionally biased stretch (pro residues) spans 96–109; that stretch reads SPMPAPRQAKPPAP. Positions 130–143 are enriched in polar residues; the sequence is NSGSEASATSSVKT. Over residues 147-157 the composition is skewed to basic and acidic residues; that stretch reads RLAEQRRHWDS. Ser-180 carries the phosphoserine modification. Thr-192 is modified (phosphothreonine). Residues 216–228 show a composition bias toward polar residues; the sequence is HSSAKQNSVQEQP. A phosphoserine mark is found at Ser-223, Ser-250, and Ser-259. Residues 229-671 form an interaction with F-actin region; that stretch reads GTACLSKSSS…RDLLYSIDAY (443 aa). Over residues 234 to 250 the composition is skewed to low complexity; the sequence is SKSSSASGASASINSSS. A compositionally biased stretch (low complexity) spans 282–298; it reads SASVSSSVKASSPVTAA. A compositionally biased stretch (basic and acidic residues) spans 303–314; it reads ENREAQNPELLH. Position 316 is a phosphothreonine (Thr-316). Ser-318 and Ser-334 each carry phosphoserine. A Phosphothreonine modification is found at Thr-359. The residue at position 366 (Lys-366) is an N6-acetyllysine. Residues 368–384 show a composition bias toward basic and acidic residues; sequence FLERFGERCQEHSKESP. Residues 391 to 401 are compositionally biased toward polar residues; sequence KTPNITPNTKA. Thr-392 and Thr-396 each carry phosphothreonine. A phosphoserine mark is found at Ser-414 and Ser-444. Positions 490-511 are disordered; the sequence is NEPAVKLSSTEPAGSTESEMTK. Residues 496-511 are compositionally biased toward polar residues; it reads LSSTEPAGSTESEMTK. A phosphoserine mark is found at Ser-513, Ser-548, and Ser-556. The stretch at 564-599 forms a coiled coil; the sequence is FSDVLEEGELDVEKSQEEMDQVGAENSEEQEDALNI. Over residues 623 to 635 the composition is skewed to polar residues; it reads SPPSELRDSNLSA. The interval 623-656 is disordered; that stretch reads SPPSELRDSNLSAASPKPGKFQRTRVPRAESADS. Residues Ser-637, Ser-653, Ser-656, and Ser-659 each carry the phosphoserine modification. Phosphotyrosine is present on Tyr-666. Ser-673, Ser-683, Ser-787, and Ser-924 each carry phosphoserine. Residues 725 to 1121 are localization to the cleavage furrow; it reads QQTVIYQASQ…DACYKPVGKP (397 aa). One can recognise a PH domain in the interval 980-1104; sequence AVEEKGFLTI…WMQKLNQVIV (125 aa).

In terms of assembly, interacts with F-actin. Interacts with CD2AP. May interact with RHOA. Interacts with FZR1/CDH1 during mitotic exit. Phosphorylated during mitosis. Post-translationally, ubiquitinated, and this requires FZR1/CDH1.

The protein localises to the nucleus. It is found in the cytoplasm. The protein resides in the cytoskeleton. It localises to the cell cortex. Its subcellular location is the cell projection. The protein localises to the bleb. Functionally, required for cytokinesis. Essential for the structural integrity of the cleavage furrow and for completion of cleavage furrow ingression. Plays a role in bleb assembly during metaphase and anaphase of mitosis. May play a significant role in podocyte cell migration. The protein is Anillin (Anln) of Mus musculus (Mouse).